The chain runs to 394 residues: UPF0284 protein SYNW1869 (394 aa).

It belongs to the UPF0284 family.

The chain is UPF0284 protein SYNW1869 from Parasynechococcus marenigrum (strain WH8102).